The chain runs to 175 residues: Peptide deformylase (175 aa).

Cysteine 99 and histidine 141 together coordinate Fe cation. Glutamate 142 is an active-site residue. Histidine 145 provides a ligand contact to Fe cation.

The protein belongs to the polypeptide deformylase family. Requires Fe(2+) as cofactor.

The catalysed reaction is N-terminal N-formyl-L-methionyl-[peptide] + H2O = N-terminal L-methionyl-[peptide] + formate. Functionally, removes the formyl group from the N-terminal Met of newly synthesized proteins. Requires at least a dipeptide for an efficient rate of reaction. N-terminal L-methionine is a prerequisite for activity but the enzyme has broad specificity at other positions. The protein is Peptide deformylase of Rickettsia akari (strain Hartford).